The chain runs to 208 residues: Porimin (208 aa).

The signal sequence occupies residues 1 to 26 (MGLGARGAWAALLLGTLQVLALLGAA). Topologically, residues 27–166 (HESAAMAASA…EAKKGSKFDT (140 aa)) are extracellular. The span at 42–57 (GLPHNSSANSTETLQH) shows a compositional bias: polar residues. The tract at residues 42-125 (GLPHNSSANS…PKTTSVSQNT (84 aa)) is disordered. N-linked (GlcNAc...) asparagine glycans are attached at residues N46, N50, N64, N68, N83, N96, and N106. Polar residues predominate over residues 65-107 (ETSNSTVKPPTSVASDSSNTTVTTMKPTAASNTTTPGMVSTNM). Low complexity predominate over residues 108 to 122 (TSTTLKSTPKTTSVS). N-linked (GlcNAc...) asparagine glycosylation is found at N124 and N138. Residues 167 to 187 (GSFVGGIVLTLGVLSILYIGC) form a helical membrane-spanning segment. Residues 188–208 (KMYYSRRGIRYRTIDEHDAII) lie on the Cytoplasmic side of the membrane.

Belongs to the CD164 family. In terms of tissue distribution, ubiquitous. Not expressed in ovary. Expressed in keratinocytes.

The protein resides in the membrane. Functionally, implicated in oncotic cell death, characterized by cell swelling, organelle swelling, vacuolization and increased membrane permeability. In Homo sapiens (Human), this protein is Porimin (TMEM123).